We begin with the raw amino-acid sequence, 363 residues long: Flagellar P-ring protein 2 (363 aa).

An N-terminal signal peptide occupies residues 1–18; that stretch reads MLIRLLLLVICLAGPGVA.

The protein belongs to the FlgI family. As to quaternary structure, the basal body constitutes a major portion of the flagellar organelle and consists of four rings (L,P,S, and M) mounted on a central rod.

Its subcellular location is the periplasm. It is found in the bacterial flagellum basal body. In terms of biological role, assembles around the rod to form the L-ring and probably protects the motor/basal body from shearing forces during rotation. This chain is Flagellar P-ring protein 2, found in Cereibacter sphaeroides (strain ATCC 17023 / DSM 158 / JCM 6121 / CCUG 31486 / LMG 2827 / NBRC 12203 / NCIMB 8253 / ATH 2.4.1.) (Rhodobacter sphaeroides).